A 178-amino-acid polypeptide reads, in one-letter code: Adenine phosphoribosyltransferase (178 aa).

This sequence belongs to the purine/pyrimidine phosphoribosyltransferase family. As to quaternary structure, homodimer.

It is found in the cytoplasm. It carries out the reaction AMP + diphosphate = 5-phospho-alpha-D-ribose 1-diphosphate + adenine. Its pathway is purine metabolism; AMP biosynthesis via salvage pathway; AMP from adenine: step 1/1. Its function is as follows. Catalyzes a salvage reaction resulting in the formation of AMP, that is energically less costly than de novo synthesis. The sequence is that of Adenine phosphoribosyltransferase from Cereibacter sphaeroides (strain ATCC 17025 / ATH 2.4.3) (Rhodobacter sphaeroides).